The chain runs to 226 residues: Ribonuclease 3 (226 aa).

Residues 2–129 (IETISKTIKY…LIGAIYLDGG (128 aa)) enclose the RNase III domain. Glu42 contributes to the Mg(2+) binding site. Asp46 is an active-site residue. Residues Asn115 and Glu118 each contribute to the Mg(2+) site. The active site involves Glu118. Positions 154–223 (DAKTILQEFI…ASLMLNQIKD (70 aa)) constitute a DRBM domain.

This sequence belongs to the ribonuclease III family. In terms of assembly, homodimer. The cofactor is Mg(2+).

It is found in the cytoplasm. It carries out the reaction Endonucleolytic cleavage to 5'-phosphomonoester.. In terms of biological role, digests double-stranded RNA. Involved in the processing of primary rRNA transcript to yield the immediate precursors to the large and small rRNAs (23S and 16S). Processes some mRNAs, and tRNAs when they are encoded in the rRNA operon. Processes pre-crRNA and tracrRNA of type II CRISPR loci if present in the organism. This chain is Ribonuclease 3, found in Ehrlichia canis (strain Jake).